Consider the following 306-residue polypeptide: Small ribosomal subunit protein uS2 (306 aa).

Residues 257–306 (EGDKKDETAAAAEVQTSAETEKVADAEKPAEAVAEAEAEAPAADADAEQA) are disordered. Residues 275-286 (ETEKVADAEKPA) are compositionally biased toward basic and acidic residues. The segment covering 287 to 300 (EAVAEAEAEAPAAD) has biased composition (low complexity).

It belongs to the universal ribosomal protein uS2 family.

The chain is Small ribosomal subunit protein uS2 from Streptomyces griseus subsp. griseus (strain JCM 4626 / CBS 651.72 / NBRC 13350 / KCC S-0626 / ISP 5235).